A 155-amino-acid chain; its full sequence is Small ribosomal subunit protein uS7 (155 aa).

The protein belongs to the universal ribosomal protein uS7 family. In terms of assembly, part of the 30S ribosomal subunit. Contacts proteins S9 and S11.

One of the primary rRNA binding proteins, it binds directly to 16S rRNA where it nucleates assembly of the head domain of the 30S subunit. Is located at the subunit interface close to the decoding center, probably blocks exit of the E-site tRNA. The sequence is that of Small ribosomal subunit protein uS7 from Sulfurovum sp. (strain NBC37-1).